The following is a 361-amino-acid chain: Probable dual-specificity RNA methyltransferase RlmN (361 aa).

Glu91 serves as the catalytic Proton acceptor. Residues 97-335 (QHYGLSVCVT…CVVRQEHGTD (239 aa)) enclose the Radical SAM core domain. Cys104 and Cys340 form a disulfide bridge. Cys111, Cys115, and Cys118 together coordinate [4Fe-4S] cluster. S-adenosyl-L-methionine contacts are provided by residues 163 to 164 (GE), Ser195, 218 to 220 (SLH), and Asn296. The S-methylcysteine intermediate role is filled by Cys340.

It belongs to the radical SAM superfamily. RlmN family. [4Fe-4S] cluster serves as cofactor.

It localises to the cytoplasm. The catalysed reaction is adenosine(2503) in 23S rRNA + 2 reduced [2Fe-2S]-[ferredoxin] + 2 S-adenosyl-L-methionine = 2-methyladenosine(2503) in 23S rRNA + 5'-deoxyadenosine + L-methionine + 2 oxidized [2Fe-2S]-[ferredoxin] + S-adenosyl-L-homocysteine. The enzyme catalyses adenosine(37) in tRNA + 2 reduced [2Fe-2S]-[ferredoxin] + 2 S-adenosyl-L-methionine = 2-methyladenosine(37) in tRNA + 5'-deoxyadenosine + L-methionine + 2 oxidized [2Fe-2S]-[ferredoxin] + S-adenosyl-L-homocysteine. Specifically methylates position 2 of adenine 2503 in 23S rRNA and position 2 of adenine 37 in tRNAs. In Streptococcus mutans serotype c (strain ATCC 700610 / UA159), this protein is Probable dual-specificity RNA methyltransferase RlmN.